We begin with the raw amino-acid sequence, 437 residues long: tRNA-2-methylthio-N(6)-dimethylallyladenosine synthase (437 aa).

The region spanning 1-115 (MKVYIETMGC…ISQVIHKEKA (115 aa)) is the MTTase N-terminal domain. Residues C10, C46, C78, C148, C152, and C155 each contribute to the [4Fe-4S] cluster site. The region spanning 134-367 (KKAQIRSLLN…QNRHKEILEE (234 aa)) is the Radical SAM core domain. Residues 370–436 (KLEVGKTHVV…KGRLIAAIKG (67 aa)) enclose the TRAM domain.

Belongs to the methylthiotransferase family. MiaB subfamily. As to quaternary structure, monomer. Requires [4Fe-4S] cluster as cofactor.

The protein localises to the cytoplasm. It catalyses the reaction N(6)-dimethylallyladenosine(37) in tRNA + (sulfur carrier)-SH + AH2 + 2 S-adenosyl-L-methionine = 2-methylsulfanyl-N(6)-dimethylallyladenosine(37) in tRNA + (sulfur carrier)-H + 5'-deoxyadenosine + L-methionine + A + S-adenosyl-L-homocysteine + 2 H(+). Catalyzes the methylthiolation of N6-(dimethylallyl)adenosine (i(6)A), leading to the formation of 2-methylthio-N6-(dimethylallyl)adenosine (ms(2)i(6)A) at position 37 in tRNAs that read codons beginning with uridine. In Helicobacter pylori (strain HPAG1), this protein is tRNA-2-methylthio-N(6)-dimethylallyladenosine synthase.